We begin with the raw amino-acid sequence, 231 residues long: Hypoxanthine-guanine-xanthine phosphoribosyltransferase (231 aa).

GMP-binding positions include Lys77, 144 to 152 (EDIIDTGKT), Lys176, and Asp204. The Proton acceptor role is filled by Asp148. Residue Asp204 participates in Mg(2+) binding.

The protein belongs to the purine/pyrimidine phosphoribosyltransferase family. In terms of assembly, homotetramer. The cofactor is Mg(2+).

It is found in the cytoplasm. The catalysed reaction is IMP + diphosphate = hypoxanthine + 5-phospho-alpha-D-ribose 1-diphosphate. It carries out the reaction GMP + diphosphate = guanine + 5-phospho-alpha-D-ribose 1-diphosphate. The enzyme catalyses XMP + diphosphate = xanthine + 5-phospho-alpha-D-ribose 1-diphosphate. Its pathway is purine metabolism; GMP biosynthesis via salvage pathway; GMP from guanine: step 1/1. It functions in the pathway purine metabolism; IMP biosynthesis via salvage pathway; IMP from hypoxanthine: step 1/1. It participates in purine metabolism; XMP biosynthesis via salvage pathway; XMP from xanthine: step 1/1. Catalyzes the transfer of a ribosyl phosphate group from 5-phosphoribose 1-diphosphate to the N(9) of hypoxanthine, guanine or xanthine, leading to IMP, GMP and XMP, respectively. Plays a central role in the generation of purine nucleotides through the purine salvage pathway. This is Hypoxanthine-guanine-xanthine phosphoribosyltransferase (LACZ) from Plasmodium falciparum (isolate K1 / Thailand).